The primary structure comprises 404 residues: Cysteine desulfurase IscS (404 aa).

Pyridoxal 5'-phosphate-binding positions include 75 to 76, Asn-155, Gln-183, and 203 to 205; these read AT and SAH. Lys-206 carries the post-translational modification N6-(pyridoxal phosphate)lysine. Thr-243 provides a ligand contact to pyridoxal 5'-phosphate. Cys-328 serves as the catalytic Cysteine persulfide intermediate. Cys-328 is a [2Fe-2S] cluster binding site.

It belongs to the class-V pyridoxal-phosphate-dependent aminotransferase family. NifS/IscS subfamily. Homodimer. Forms a heterotetramer with IscU, interacts with other sulfur acceptors. It depends on pyridoxal 5'-phosphate as a cofactor.

Its subcellular location is the cytoplasm. It catalyses the reaction (sulfur carrier)-H + L-cysteine = (sulfur carrier)-SH + L-alanine. It participates in cofactor biosynthesis; iron-sulfur cluster biosynthesis. Functionally, master enzyme that delivers sulfur to a number of partners involved in Fe-S cluster assembly, tRNA modification or cofactor biosynthesis. Catalyzes the removal of elemental sulfur atoms from cysteine to produce alanine. Functions as a sulfur delivery protein for Fe-S cluster synthesis onto IscU, an Fe-S scaffold assembly protein, as well as other S acceptor proteins. This is Cysteine desulfurase IscS from Vesicomyosocius okutanii subsp. Calyptogena okutanii (strain HA).